The sequence spans 416 residues: MTQQHPLMRLVNSTSLVSQILVGLVFGILLAMFMPEWAKAAGLLGSLFVGALKAVAPLLVFVLVMAAIIGHKQGQKSNMKPILLLYLLGTFLAAAVAVVASFLFPSNLHLVASSAEITPPGGITEVLQTLLFNVVTNPVKALMDANYIGILAWAIGLGIAMRHANDSTKAMITDLSHGVSTIVKAVIRCAPLGILGLVASTLAETGFDALFGYAHLLVVLIGCMLFIAFVVNPIIVFWKIRRNPYPLVLTCLKESGVTAFFTRSSAANIPVNMTLCEKLRLPEDTYAVSIPLGATINMAGAAITITVLSMAAVHTLGMEVDLATAVLLSVVATISACGASGVAGGSLLLIPLACSLFGIGNDIAMQVVAVGFIIGVLQDSAETALNSSTDVLFTAAACMAEDETLLDAASLPSREA.

A run of 9 helical transmembrane segments spans residues 15–35 (SLVS…MFMP), 49–69 (VGAL…AAII), 82–102 (ILLL…VASF), 141–161 (ALMD…GIAM), 192–212 (LGIL…ALFG), 217–237 (LVVL…IIVF), 288–308 (VSIP…ITVL), 330–350 (VVAT…LLLI), and 356–376 (LFGI…IIGV).

Belongs to the dicarboxylate/amino acid:cation symporter (DAACS) (TC 2.A.23) family.

It is found in the cell inner membrane. The enzyme catalyses L-serine(in) + Na(+)(in) = L-serine(out) + Na(+)(out). It catalyses the reaction L-threonine(in) + Na(+)(in) = L-threonine(out) + Na(+)(out). Involved in the import of serine and threonine into the cell, with the concomitant import of sodium (symport system). The sequence is that of Serine/threonine transporter SstT from Aeromonas salmonicida (strain A449).